The primary structure comprises 1054 residues: MLPSTARDGLYRLSTYLEELEAGELKKFKLFLGIAEDLSQDKIPWGRMEKAGPLEMAQLMVAHMGTREAWLLALSTFQRIHRKDLWERGQGEDLVRVTPNNGLCLFESQSACPLDVSPNAPRKDLQTTYKDYVRRKFQLMEDRNARLGECVNLSNRYTRLLLVKEHSNPIWTQQKFVDVEWERSRTRRHQTSPIQMETLFEPDEERPEPPHTVVLQGAAGMGKSMLAHKVMLDWADGRLFQGRFDYVFYISCRELNRSHTQCSVQDLISSCWPERGISLEDLMQAPDRLLFIIDGFDKLHPSFHDAQGPWCLCWEEKQPTEVLLGSLIRRLLLPQVSLLITTRPCALEKLHGLLEHPRHVEILGFSEEARKEYFYRYFHNTGQASRVLSFLMDYEPLFTMCFVPMVSWVVCTCLKQQLESGELLRQTPRTTTAVYMFYLLSLMQPKPGTPTFKVPANQRGLVSLAAEGLWNQKILFDEQDLGKHGLDGADVSTFLNVNIFQKGIKCEKFYSFIHLSFQEFFAAMYCALNGREAVRRALAEYGFSERNFLALTVHFLFGLLNEEMRCYLERNLGWSISPQVKEEVLAWIQNKAGSEGSTLQHGSLELLSCLYEVQEEDFIQQALSHFQVVVVRSISTKMEHMVCSFCARYCRSTEVLHLHGSAYSTGMEDDPPEPSGVQTQSTYLQERNMLPDVYSAYLSAAVCTNSNLIELALYRNALGSQGVRLLCQGLRHASCKLQNLRLKRCQISGSACQDLAAAVIANRNLIRLDLSDNSIGVPGLELLCEGLQHPRCRLQMIQLRKCLLEAAAGRSLASVLSNNSYLVELDLTGNPLEDSGLKLLCQGLRHPVCRLRTLWLKICHLGQASCEDLASTLKMNQSLLELDLGLNDLGDSGVLLLCEGLSHPDCKLQTLRLGICRLGSVACVGIASVLQVNTCLQELDLSFNDLGDRGLQLLGEGLRHQTCRLQKLWLDNCGLTSKACEDLSSILGISQTLHELYLTNNALGDTGVCLLCKRLRHPGCKLRVLWLFGMDLNKKTHRRMAALRVTKPYLDIGC.

A Pyrin domain is found at 1 to 95 (MLPSTARDGL…WERGQGEDLV (95 aa)). In terms of domain architecture, FISNA spans 129–201 (YKDYVRRKFQ…SPIQMETLFE (73 aa)). The region spanning 211–528 (HTVVLQGAAG…EFFAAMYCAL (318 aa)) is the NACHT domain. 217–224 (GAAGMGKS) lines the ATP pocket. LRR repeat units follow at residues 821-841 (YLVELDLTGNPLEDSGLKLLC), 850-871 (RLRTLWLKICHLGQASCEDLAS), 878-899 (SLLELDLGLNDLGDSGVLLLCE), 907-928 (KLQTLRLGICRLGSVACVGIAS), 935-955 (CLQELDLSFNDLGDRGLQLLG), 964-985 (RLQKLWLDNCGLTSKACEDLSS), 992-1013 (TLHELYLTNNALGDTGVCLLCK), and 1021-1042 (KLRVLWLFGMDLNKKTHRRMAA).

The protein belongs to the NLRP family. In terms of assembly, interacts (via pyrin domain) with ASC. Interacts (via pyrin domain) with FAF1 (via UBA domain). Interacts with MAP3K14; this interaction promotes proteasomal degradation of MAP3K14. Interacts with NOD2; this interaction promotes degradation of NOD2 through the ubiquitin-proteasome pathway. Interacts with HSPA1A and HSPA8. Interacts with HSP90AA1. Interacts with TRIM25; this interaction inhibits RIGI-mediated signaling pathway. In terms of tissue distribution, mainly expressed in dendritic cells (DCs) and neutrophils.

It is found in the cytoplasm. In terms of biological role, plays an essential role as an potent mitigator of inflammation. Primarily expressed in dendritic cells and macrophages, inhibits both canonical and non-canonical NF-kappa-B and ERK activation pathways. Functions as a negative regulator of NOD2 by targeting it to degradation via the proteasome pathway. In turn, promotes bacterial tolerance. Also inhibits the RIGI-mediated immune signaling against RNA viruses by reducing the E3 ubiquitin ligase TRIM25-mediated 'Lys-63'-linked RIGI activation but enhancing the E3 ubiquitin ligase RNF125-mediated 'Lys-48'-linked RIGI degradation. Also acts as a negative regulator of inflammatory response to mitigate obesity and obesity-associated diseases in adipose tissue. The chain is NACHT, LRR and PYD domains-containing protein 12 (Nlrp12) from Mus musculus (Mouse).